The chain runs to 2090 residues: Ninein (2090 aa).

2 consecutive EF-hand domains span residues 8-43 (QHEARLKELFDSFDTTGTGSLGQEELTDLCHMLSLE) and 42-77 (LEEVAPVLQQTLLQDNLLGRVHFDQFKEALILILSR). Residue S152 is modified to Phosphoserine. 2 consecutive EF-hand domains span residues 182-217 (WIEEKLQEVCEDLGITRDGHLNRKKLVSICEQYGLQ) and 219-252 (VDGEMLEEVFHNLDPDGTMSVEDFFYGLFKNGKS). Residue 245-252 (GLFKNGKS) coordinates GTP. S269 is subject to Phosphoserine. A GTP-binding site is contributed by 300–304 (DGMGH). Positions 317–352 (EGIENSQEILKALDFSLDGNINLTELTLALENELLV) constitute an EF-hand 5 domain. Residues 357–570 (IHQAALASFK…YRAQGRVLRL (214 aa)) are a coiled coil. Position 420 to 423 (420 to 423 (RKLD)) interacts with GTP. Positions 574–595 (NSPSEEVEANSGGIEPEHGLGS) are disordered. Coiled coils occupy residues 625–1027 (LRLE…QATS), 1068–1099 (LSLQRAHEQAVKENVKMATEISRLQQRLQKLE), 1181–1341 (SELE…SVVQ), and 1441–1816 (QDKH…AGGK). The tract at residues 802 to 1505 (KMETECNRRT…HDLQITCSEM (704 aa)) is important for interaction with CEP170. A disordered region spans residues 1152–1190 (VRDLGSTGTSSVQRQEVKIEESEASVEGFSELENSEETR). Phosphoserine occurs at positions 1550 and 1837. 2 coiled-coil regions span residues 1854-1885 (QENERLQTMVQNTKAELTHSREKVRQLESNLL) and 1922-2067 (ANRK…QVSL).

In terms of assembly, homooligomer. Interacts with GSK3B/GSK3-beta via its C-terminal domain. Interacts with C14ORF166, such interaction may prevent its phosphorylation by GSK3B. Interacts with AUNIP (via N-terminus). Identified in a complex with AUNIP and AURKA. Interacts with CCDC120. Interacts (via C-terminus) with CEP250. Interacts with CEP170. Interacts with the gamma-tubulin ring complex component TUBGCP3. Interacts with gamma-tubulin. Isoform 6 does not interact with CEP170 or CEP250. Post-translationally, phosphorylated by AURKA/Aurora kinase A and PKA kinases but not CK2 or AURKB/ Aurora kinase B. In terms of tissue distribution, ubiquitous. Highly expressed in heart and skeletal muscle. Isoform 1 is more expressed than isoform 5.

Its subcellular location is the cytoplasm. The protein resides in the cytoskeleton. It localises to the microtubule organizing center. It is found in the centrosome. The protein localises to the centriole. Functionally, centrosomal protein required in the positioning and anchorage of the microtubule minus-end in epithelial cells. May also act as a centrosome maturation factor. May play a role in microtubule nucleation, by recruiting the gamma-tubulin ring complex to the centrosome. Overexpression does not perturb nucleation or elongation of microtubules but suppresses release of microtubules. Required for centriole organization and microtubule anchoring at the mother centriole. This chain is Ninein (NIN), found in Homo sapiens (Human).